A 507-amino-acid polypeptide reads, in one-letter code: Sterol 14-alpha demethylase CYP51A (507 aa).

The helical transmembrane segment at 7–29 threads the bilayer; that stretch reads YPLWVLVALFAVIIANLLYQQLP. Lanosterol is bound at residue tyrosine 105. Cysteine 449 lines the heme pocket.

Belongs to the cytochrome P450 family. Heme serves as cofactor.

It localises to the endoplasmic reticulum membrane. The enzyme catalyses a 14alpha-methyl steroid + 3 reduced [NADPH--hemoprotein reductase] + 3 O2 = a Delta(14) steroid + formate + 3 oxidized [NADPH--hemoprotein reductase] + 4 H2O + 4 H(+). The catalysed reaction is a 14alpha-methyl steroid + reduced [NADPH--hemoprotein reductase] + O2 = a 14alpha-hydroxymethyl steroid + oxidized [NADPH--hemoprotein reductase] + H2O + H(+). It carries out the reaction a 14alpha-hydroxymethyl steroid + reduced [NADPH--hemoprotein reductase] + O2 = a 14alpha-formyl steroid + oxidized [NADPH--hemoprotein reductase] + 2 H2O + H(+). It catalyses the reaction a 14alpha-formyl steroid + reduced [NADPH--hemoprotein reductase] + O2 = a Delta(14) steroid + formate + oxidized [NADPH--hemoprotein reductase] + H2O + 2 H(+). The enzyme catalyses lanosterol + 3 reduced [NADPH--hemoprotein reductase] + 3 O2 = 4,4-dimethyl-5alpha-cholesta-8,14,24-trien-3beta-ol + formate + 3 oxidized [NADPH--hemoprotein reductase] + 4 H2O + 4 H(+). The catalysed reaction is lanosterol + reduced [NADPH--hemoprotein reductase] + O2 = 32-hydroxylanosterol + oxidized [NADPH--hemoprotein reductase] + H2O + H(+). It carries out the reaction 32-hydroxylanosterol + reduced [NADPH--hemoprotein reductase] + O2 = 32-oxolanosterol + oxidized [NADPH--hemoprotein reductase] + 2 H2O + H(+). It catalyses the reaction 32-oxolanosterol + reduced [NADPH--hemoprotein reductase] + O2 = 4,4-dimethyl-5alpha-cholesta-8,14,24-trien-3beta-ol + formate + oxidized [NADPH--hemoprotein reductase] + H2O + 2 H(+). The enzyme catalyses eburicol + 3 reduced [NADPH--hemoprotein reductase] + 3 O2 = 14-demethyleburicol + formate + 3 oxidized [NADPH--hemoprotein reductase] + 4 H2O + 4 H(+). The catalysed reaction is eburicol + reduced [NADPH--hemoprotein reductase] + O2 = 32-hydroxyeburicol + oxidized [NADPH--hemoprotein reductase] + H2O + H(+). It carries out the reaction 32-hydroxyeburicol + reduced [NADPH--hemoprotein reductase] + O2 = 32-oxoeburicol + oxidized [NADPH--hemoprotein reductase] + 2 H2O + H(+). It catalyses the reaction 32-oxoeburicol + reduced [NADPH--hemoprotein reductase] + O2 = 14-demethyleburicol + formate + oxidized [NADPH--hemoprotein reductase] + H2O + 2 H(+). It participates in steroid metabolism; ergosterol biosynthesis. Its function is as follows. Together with cyp51B and cyp51C, encodes the sterol 14alpha-demethylase that plays a critical role in the third module of ergosterol biosynthesis pathway, being ergosterol the major sterol component in fungal membranes that participates in a variety of functions. CYP51A encodes the sterol 14-alpha-demethylase induced on ergosterol depletion and is responsible for the intrinsic variation in azole sensitivity. The third module or late pathway involves the ergosterol synthesis itself through consecutive reactions that mainly occur in the endoplasmic reticulum (ER) membrane. In filamentous fungi, during the initial step of this module, lanosterol (lanosta-8,24-dien-3beta-ol) can be metabolized to eburicol. Sterol 14alpha-demethylase catalyzes the three-step oxidative removal of the 14alpha-methyl group (C-32) of both these sterols in the form of formate, and converts eburicol and lanosterol to 14-demethyleburicol (4,4,24-trimethylergosta-8,14,24(28)-trienol) and 4,4-dimethyl-5alpha-cholesta-8,14,24-trien-3beta-ol, respectively, which are further metabolized by other enzymes in the pathway to ergosterol. Can also use substrates not intrinsic to fungi, such as 24,25-dihydrolanosterol (DHL), producing 4,4'-dimethyl-8,14-cholestadien-3-beta-ol, but at lower rates than the endogenous substrates. The sequence is that of Sterol 14-alpha demethylase CYP51A from Gibberella zeae (strain ATCC MYA-4620 / CBS 123657 / FGSC 9075 / NRRL 31084 / PH-1) (Wheat head blight fungus).